The primary structure comprises 584 residues: Negative regulator of RAS-cAMP pathway (584 aa).

The residue at position 25 (Thr-25) is a Phosphothreonine. Disordered regions lie at residues Pro-95 to Ser-167, Pro-209 to Ser-279, Ser-291 to Asn-320, Asn-343 to Val-366, and Ser-381 to Thr-432. Composition is skewed to polar residues over residues Pro-114 to Met-127, Cys-229 to Gln-254, and Asn-267 to Thr-278. Residues Ser-247 and Ser-276 each carry the phosphoserine modification. Residues Phe-307–Asn-320 are compositionally biased toward acidic residues. Residues Asn-343–His-363 show a composition bias toward polar residues. Low complexity predominate over residues Ser-381–Glu-392. A compositionally biased stretch (polar residues) spans Val-398–Thr-432. Ser-442 is subject to Phosphoserine. Ser-518 is subject to Phosphoserine; by PKA. The segment at Asp-551 to Ile-584 is disordered. The span at Asn-557–Asn-568 shows a compositional bias: low complexity.

The protein localises to the nucleus. Functionally, negative regulator of Ras-cAMP pathway. Involved in transcriptional regulation of galactose-inducible genes. This Saccharomyces cerevisiae (strain ATCC 204508 / S288c) (Baker's yeast) protein is Negative regulator of RAS-cAMP pathway (MKS1).